The sequence spans 106 residues: Putative membrane protein insertion efficiency factor (106 aa).

This sequence belongs to the UPF0161 family.

Its subcellular location is the cell inner membrane. Could be involved in insertion of integral membrane proteins into the membrane. This Acinetobacter baumannii (strain AB307-0294) protein is Putative membrane protein insertion efficiency factor.